A 360-amino-acid polypeptide reads, in one-letter code: Replication-associated protein (360 aa).

The 104-residue stretch at 11–114 (SHRNANTFLT…PLAVFERGTF (104 aa)) folds into the CRESS-DNA virus Rep endonuclease domain. The short motif at 18–21 (FLTY) is the RCR-1 element. 3 residues coordinate a divalent metal cation: Glu52, His60, and His62. The RCR-2 signature appears at 60 to 62 (HLH). The active-site For DNA cleavage activity is Tyr100. An RCR-3 motif is present at residues 100-103 (YILK). Glu104 contacts a divalent metal cation. Residues 175–187 (SANKLFPEIQEEF) are oligomerization. 229–236 (GPTRTGKS) is an ATP binding site. The transactivation stretch occupies residues 252-270 (VDWSSYNEDAIYNIVDDIP). A Nuclear localization signal motif is present at residues 292 to 303 (KYGKKKKVQKKS).

This sequence belongs to the geminiviridae Rep protein family. As to quaternary structure, homooligomer. Rep binds to repeated DNA motifs (iterons). Forms the O-complex, which is a Rep-DNA complex involved in the initiation of RCR. Part of the C- and V-complexes which are RepA-Rep-DNA complexes involved in the c-sense and v-sense transcription. The cofactor is Mg(2+). Mn(2+) is required as a cofactor.

It is found in the host nucleus. Essential for the replication of viral ssDNA. The closed circular ssDNA genome is first converted to a superhelical dsDNA. Rep binds a specific region at the genome origin of replication. It introduces an endonucleolytic nick within the conserved sequence 5'-TAATATTAC-3' in the intergenic region of the genome present in all geminiviruses, thereby initiating the rolling circle replication (RCR). Following cleavage, binds covalently to the 5'-phosphate of DNA as a tyrosyl ester. The cleavage gives rise to a free 3'-OH that serves as a primer for the cellular DNA polymerase. The polymerase synthesizes the (+) strand DNA by rolling circle mechanism. After one round of replication, a Rep-catalyzed nucleotidyl transfer reaction releases a circular single-stranded virus genome, thereby terminating the replication. Displays origin-specific DNA cleavage, nucleotidyl transferase, ATPase and helicase activities. Acts as an inhibitor of C-sense gene transcription. The polypeptide is Replication-associated protein (Maize streak virus genotype A (isolate Nigeria) (MSV)).